The primary structure comprises 403 residues: Aminomethyltransferase, mitochondrial (403 aa).

The transit peptide at 1 to 28 (MQRAVSVVARLGFRLQAFPPALCRPLSC) directs the protein to the mitochondrion. Substrate is bound by residues glutamate 232, arginine 261, and tyrosine 399.

Belongs to the GcvT family. As to quaternary structure, the glycine cleavage system is composed of four proteins: P, T, L and H.

Its subcellular location is the mitochondrion. It carries out the reaction N(6)-[(R)-S(8)-aminomethyldihydrolipoyl]-L-lysyl-[protein] + (6S)-5,6,7,8-tetrahydrofolate = N(6)-[(R)-dihydrolipoyl]-L-lysyl-[protein] + (6R)-5,10-methylene-5,6,7,8-tetrahydrofolate + NH4(+). In terms of biological role, the glycine cleavage system catalyzes the degradation of glycine. This Homo sapiens (Human) protein is Aminomethyltransferase, mitochondrial.